The sequence spans 447 residues: N-succinylarginine dihydrolase (447 aa).

Residues 19–28, Asn-110, and 137–138 contribute to the substrate site; these read AGLSFGNEAS and HR. Glu-174 is a catalytic residue. Position 212 (Arg-212) interacts with substrate. The active site involves His-248. Residues Asp-250 and Asn-359 each coordinate substrate. Residue Cys-365 is the Nucleophile of the active site.

It belongs to the succinylarginine dihydrolase family. As to quaternary structure, homodimer.

The enzyme catalyses N(2)-succinyl-L-arginine + 2 H2O + 2 H(+) = N(2)-succinyl-L-ornithine + 2 NH4(+) + CO2. The protein operates within amino-acid degradation; L-arginine degradation via AST pathway; L-glutamate and succinate from L-arginine: step 2/5. Functionally, catalyzes the hydrolysis of N(2)-succinylarginine into N(2)-succinylornithine, ammonia and CO(2). The polypeptide is N-succinylarginine dihydrolase (Escherichia fergusonii (strain ATCC 35469 / DSM 13698 / CCUG 18766 / IAM 14443 / JCM 21226 / LMG 7866 / NBRC 102419 / NCTC 12128 / CDC 0568-73)).